The chain runs to 495 residues: Cytochrome P450 94C1 (495 aa).

A helical transmembrane segment spans residues 2 to 22 (LLIISFTIVSFFFIIIFSLFH). A heme-binding site is contributed by C439.

It belongs to the cytochrome P450 family. Heme is required as a cofactor.

It is found in the membrane. The protein localises to the endoplasmic reticulum membrane. The catalysed reaction is a 12-hydroxyjasmonyl-L-alpha-amino acid + 2 reduced [NADPH--hemoprotein reductase] + 2 O2 = a 12-hydroxy-12-oxojasmonyl-L-alpha-amino acid + 2 oxidized [NADPH--hemoprotein reductase] + 3 H2O + 3 H(+). Functionally, involved in the oxidation of the plant hormone jasmonoyl-L-isoleucine (JA-Ile), a bioactive phytohormone of the jasmonate-mediated signaling pathway. Converts 12-hydroxy-JA-Ile (12OH-JA-Ile) to the carboxy-derivative 12COOH-JA-Ile. Exerts negative feedback control on JA-Ile levels and plays a role in attenuation of jasmonate responses. Also functions as in-chain fatty acids hydroxylase in vitro. Catalyzes the hydroxylation of 12-hydroxy-jasmonoyl-L-phenylalanine (12OH-JA-Phe) in vitro. Converts 12OH-JA-Phe to the carboxy-derivative 12COOH-JA-Phe. The protein is Cytochrome P450 94C1 of Arabidopsis thaliana (Mouse-ear cress).